A 217-amino-acid chain; its full sequence is Ribonuclease HII (217 aa).

Positions 27–216 (SQVAGVDEAG…VKESIQEGVC (190 aa)) constitute an RNase H type-2 domain. Positions 33, 34, and 126 each coordinate a divalent metal cation.

This sequence belongs to the RNase HII family. Mn(2+) is required as a cofactor. It depends on Mg(2+) as a cofactor.

It localises to the cytoplasm. It catalyses the reaction Endonucleolytic cleavage to 5'-phosphomonoester.. In terms of biological role, endonuclease that specifically degrades the RNA of RNA-DNA hybrids. This Chlamydia trachomatis serovar D (strain ATCC VR-885 / DSM 19411 / UW-3/Cx) protein is Ribonuclease HII (rnhB).